The following is a 184-amino-acid chain: Tumor necrosis factor alpha-induced protein 8-like protein 2 (184 aa).

Ser3 carries the post-translational modification Phosphoserine.

It belongs to the TNFAIP8 family. TNFAIP8L2 subfamily. May interact with CASP8; however, such result is unclear since could not reproduce the interaction with CASP8. Interacts with RAC1. In terms of processing, phosphorylated by TAK1/MAP3K7; this phosphorylation triggers association with BTRC and subsequent ubiquitination and degradation. Post-translationally, ubiquitinated in a BTRC-depdent manner; leading to degradation mediated through the proteasome pathway.

It localises to the cytoplasm. Its subcellular location is the nucleus. It is found in the lysosome. Acts as a negative regulator of innate and adaptive immunity by maintaining immune homeostasis. Plays a regulatory role in the Toll-like signaling pathway by determining the strength of LPS-induced signaling and gene expression. Inhibits TCR-mediated T-cell activation and negatively regulate T-cell function to prevent hyperresponsiveness. Also inhibits autolysosome formation via negatively modulating MTOR activation by interacting with RAC1 and promoting the disassociation of the RAC1-MTOR complex. Plays an essential role in NK-cell biology by acting as a checkpoint and displaying an expression pattern correlating with NK-cell maturation process and by negatively regulating NK-cell maturation and antitumor immunity. Mechanistically, suppresses IL-15-triggered mTOR activity in NK-cells. The sequence is that of Tumor necrosis factor alpha-induced protein 8-like protein 2 (Tnfaip8l2) from Rattus norvegicus (Rat).